The chain runs to 167 residues: Translationally-controlled tumor protein homolog (167 aa).

In terms of domain architecture, TCTP spans 1-167 (MLIFEDVISG…WKHGVKENKI (167 aa)).

Belongs to the TCTP family.

It localises to the cytoplasm. The protein resides in the cytoskeleton. Functionally, involved in protein synthesis. Involved in microtubule stabilization. The polypeptide is Translationally-controlled tumor protein homolog (TMA19) (Candida albicans (strain SC5314 / ATCC MYA-2876) (Yeast)).